We begin with the raw amino-acid sequence, 286 residues long: Ribosomal RNA small subunit methyltransferase A (286 aa).

S-adenosyl-L-methionine-binding residues include asparagine 28, leucine 30, glycine 55, glutamate 77, aspartate 103, and asparagine 123.

Belongs to the class I-like SAM-binding methyltransferase superfamily. rRNA adenine N(6)-methyltransferase family. RsmA subfamily.

It localises to the cytoplasm. The catalysed reaction is adenosine(1518)/adenosine(1519) in 16S rRNA + 4 S-adenosyl-L-methionine = N(6)-dimethyladenosine(1518)/N(6)-dimethyladenosine(1519) in 16S rRNA + 4 S-adenosyl-L-homocysteine + 4 H(+). Functionally, specifically dimethylates two adjacent adenosines (A1518 and A1519) in the loop of a conserved hairpin near the 3'-end of 16S rRNA in the 30S particle. May play a critical role in biogenesis of 30S subunits. This is Ribosomal RNA small subunit methyltransferase A from Bradyrhizobium sp. (strain ORS 278).